Here is a 166-residue protein sequence, read N- to C-terminus: MSKPLCSTGLRWLWLVVVVLIIDLGSKYLILQNFALGDTVGLFPSLNLHYARNYGAAFSFLADSGGWQRWFFAGIAIGICVILLVMMYRSKATQKLNNIAYALIIGGALGNLFDRLWHGFVVDMIDFYVGDWHFATFNLADTAICIGAALIVLEGFLPKPTAKEQA.

A run of 3 helical transmembrane segments spans residues 12–32 (WLWL…LILQ), 70–90 (WFFA…MYRS), and 102–122 (ALII…GFVV). Active-site residues include aspartate 123 and aspartate 141. Residues 137 to 157 (FNLADTAICIGAALIVLEGFL) traverse the membrane as a helical segment.

The protein belongs to the peptidase A8 family.

The protein resides in the cell inner membrane. It carries out the reaction Release of signal peptides from bacterial membrane prolipoproteins. Hydrolyzes -Xaa-Yaa-Zaa-|-(S,diacylglyceryl)Cys-, in which Xaa is hydrophobic (preferably Leu), and Yaa (Ala or Ser) and Zaa (Gly or Ala) have small, neutral side chains.. Its pathway is protein modification; lipoprotein biosynthesis (signal peptide cleavage). This protein specifically catalyzes the removal of signal peptides from prolipoproteins. In Salmonella paratyphi A (strain ATCC 9150 / SARB42), this protein is Lipoprotein signal peptidase.